A 365-amino-acid polypeptide reads, in one-letter code: Chorismate synthase (365 aa).

2 residues coordinate NADP(+): R48 and R54. FMN-binding positions include 131–133, 243–244, G288, 303–307, and R329; these read RSS, NA, and KPTSS.

It belongs to the chorismate synthase family. Homotetramer. It depends on FMNH2 as a cofactor.

It catalyses the reaction 5-O-(1-carboxyvinyl)-3-phosphoshikimate = chorismate + phosphate. The protein operates within metabolic intermediate biosynthesis; chorismate biosynthesis; chorismate from D-erythrose 4-phosphate and phosphoenolpyruvate: step 7/7. Catalyzes the anti-1,4-elimination of the C-3 phosphate and the C-6 proR hydrogen from 5-enolpyruvylshikimate-3-phosphate (EPSP) to yield chorismate, which is the branch point compound that serves as the starting substrate for the three terminal pathways of aromatic amino acid biosynthesis. This reaction introduces a second double bond into the aromatic ring system. In Rhizobium leguminosarum bv. trifolii (strain WSM2304), this protein is Chorismate synthase.